A 326-amino-acid chain; its full sequence is Type II methyltransferase M.CviAII (326 aa).

Belongs to the N(4)/N(6)-methyltransferase family.

The catalysed reaction is a 2'-deoxyadenosine in DNA + S-adenosyl-L-methionine = an N(6)-methyl-2'-deoxyadenosine in DNA + S-adenosyl-L-homocysteine + H(+). Its function is as follows. An alpha subtype methylase that recognizes the double-stranded sequence 5'-CATG-3', methylates A-2 on both strands and protects the DNA from cleavage by the CviAII endonuclease. The chain is Type II methyltransferase M.CviAII (CVIAIIM) from Paramecium bursaria Chlorella virus 1 (PBCV-1).